The sequence spans 178 residues: MAQDQGEKENPMRELRIRKLCLNICVGESGDRLTRAAKVLEQLTGQTPVFSKARYTVRSFGIRRNEKIAVHCTVRGAKAEEILEKGLKVREYELRKNNFSDTGNFGFGIQEHIDLGIKYDPSIGIYGLDFYVVLGRPGFSITDKKRRTGCIGAKHRISKEEAMRWFQQKYDGIILPGK.

Alanine 2 carries the N-acetylalanine modification. Lysine 38 is covalently cross-linked (Glycyl lysine isopeptide (Lys-Gly) (interchain with G-Cter in SUMO2)). Residues threonine 44 and threonine 47 each carry the phosphothreonine modification. Lysine 52 carries the post-translational modification N6-acetyllysine; alternate. Residue lysine 52 forms a Glycyl lysine isopeptide (Lys-Gly) (interchain with G-Cter in SUMO2); alternate linkage. Lysine 85 is subject to N6-acetyllysine. Residue lysine 154 forms a Glycyl lysine isopeptide (Lys-Gly) (interchain with G-Cter in SUMO2) linkage.

The protein belongs to the universal ribosomal protein uL5 family. Component of the large ribosomal subunit (LSU). Part of the 5S RNP complex, which is a LSU subcomplex composed of the 5S RNA, RPL5 and RPL11. Component of a hexameric 5S RNP precursor complex, composed of 5S RNA, RRS1, RPF2/BXDC1, RPL5, RPL11 and HEATR3; this complex acts as a precursor for ribosome assembly. Interacts with PML. Interacts with MDM2 (via its RanBP2-type zinc finger domain); negatively regulates MDM2-mediated TP53 ubiquitination and degradation. Interacts with NOP53; retains RPL11 into the nucleolus.

The protein resides in the nucleus. The protein localises to the nucleolus. Its subcellular location is the cytoplasm. Functionally, component of the ribosome, a large ribonucleoprotein complex responsible for the synthesis of proteins in the cell. The small ribosomal subunit (SSU) binds messenger RNAs (mRNAs) and translates the encoded message by selecting cognate aminoacyl-transfer RNA (tRNA) molecules. The large subunit (LSU) contains the ribosomal catalytic site termed the peptidyl transferase center (PTC), which catalyzes the formation of peptide bonds, thereby polymerizing the amino acids delivered by tRNAs into a polypeptide chain. The nascent polypeptides leave the ribosome through a tunnel in the LSU and interact with protein factors that function in enzymatic processing, targeting, and the membrane insertion of nascent chains at the exit of the ribosomal tunnel. As part of the 5S RNP/5S ribonucleoprotein particle it is an essential component of the LSU, required for its formation and the maturation of rRNAs. It also couples ribosome biogenesis to p53/TP53 activation. As part of the 5S RNP it accumulates in the nucleoplasm and inhibits MDM2, when ribosome biogenesis is perturbed, mediating the stabilization and the activation of TP53. Promotes nucleolar location of PML. This chain is Large ribosomal subunit protein uL5 (RPL11), found in Pongo abelii (Sumatran orangutan).